Reading from the N-terminus, the 624-residue chain is MNLEQLYDVIVVGGGHAGTEAALAAARLGVKTLLLTHNIDLLGQMSCNPAIGGIGKGHLVKEIDALDGAMAKAADQAGIQFRILNASKGPAVRATRAQADRVLYRKAIRTQLQSQANLTIFQQAVDDLKIEGGLVTGVVTQMGLTLKARAVVLTVGTFLGGKIHVGMNQYAGGRAGDPPSIALSKSLRDLDLPVGRLKTGTPPRIDRRTIDFSQMVEQPGDTPVPVFSYLGTASDHPQQVPCHITHTTEATHDIIRNNLDKSPMYAGVIEGVGPRYCPSIEDKIVRFADKTSHQIFVEPEGLTTEEIYPNGISTSLPFEVQVQFVRTIKGFENAHITRPGYAIEYDYFDPRGLTSFLQTKAIPNLFFAGQINGTTGYEEAAAQGIIAGMNAALQIKDQELWCPRRDEAYIGVLIDDLITCGTQEPYRMFTSRAEYRLLLREDNADLRLTEKGRQLGLVGDERWESFSKKREAIESTQALLHNSWVRVHHNDLFKEALLNPMQHDCRAAEFLKRPEINYQHLLMMDDLNLPELPQEITEQIEIQNKYAGYIDRQQQEIEKLRKHENTMLPETLDYNDVVGLSSEVIQKLNRIKPTSLAQAGRISGVTPAALSLLLVHLKKSRLPV.

FAD is bound by residues 13–18, Val-125, and Ser-180; that span reads GGGHAG. Residue 273-287 participates in NAD(+) binding; that stretch reads GPRYCPSIEDKIVRF. Residue Gln-370 coordinates FAD.

It belongs to the MnmG family. As to quaternary structure, homodimer. Heterotetramer of two MnmE and two MnmG subunits. It depends on FAD as a cofactor.

The protein localises to the cytoplasm. In terms of biological role, NAD-binding protein involved in the addition of a carboxymethylaminomethyl (cmnm) group at the wobble position (U34) of certain tRNAs, forming tRNA-cmnm(5)s(2)U34. This Legionella pneumophila (strain Paris) protein is tRNA uridine 5-carboxymethylaminomethyl modification enzyme MnmG.